The chain runs to 428 residues: Adenylosuccinate synthetase (428 aa).

GTP-binding positions include 12–18 (GDEGKGK) and 40–42 (GHT). Asp13 (proton acceptor) is an active-site residue. Mg(2+)-binding residues include Asp13 and Gly40. Residues 13-16 (DEGK), 38-41 (NAGH), Thr130, Arg144, Gln225, Thr240, and Arg304 each bind IMP. The active-site Proton donor is the His41. 300 to 306 (ATTGRPR) provides a ligand contact to substrate. Residues Arg306, 332–334 (KLD), and 415–417 (SVG) contribute to the GTP site.

The protein belongs to the adenylosuccinate synthetase family. As to quaternary structure, homodimer. Mg(2+) serves as cofactor.

The protein resides in the cytoplasm. The catalysed reaction is IMP + L-aspartate + GTP = N(6)-(1,2-dicarboxyethyl)-AMP + GDP + phosphate + 2 H(+). It participates in purine metabolism; AMP biosynthesis via de novo pathway; AMP from IMP: step 1/2. Plays an important role in the de novo pathway of purine nucleotide biosynthesis. Catalyzes the first committed step in the biosynthesis of AMP from IMP. This is Adenylosuccinate synthetase from Lawsonia intracellularis (strain PHE/MN1-00).